The following is a 568-amino-acid chain: WW domain-containing protein A (568 aa).

One can recognise a C2 domain in the interval 6-129 (PLNNSNGSNS…TGPISHDVVF (124 aa)). The WW 1 domain maps to 325–359 (VKLPDGWESRIDPVSGKVFYLNHNNKTTSWISPLE). The interval 376-461 (TILDNNNNNN…SRPKKTPATP (86 aa)) is disordered. The span at 380-418 (NNNNNNNNNNNNNNNNNNNNNNINNTNNIQQKQQAQQQP) shows a compositional bias: low complexity. The segment covering 435–451 (QKEKEKEKEINAEDYKI) has biased composition (basic and acidic residues). One can recognise a WW 2 domain in the interval 519 to 552 (QGLPNGWEVRQDQFGRVFYVDHINRATTWTRPTV).

In terms of assembly, interacts with calmodulin in the absence of Ca(2+).

It is found in the nucleus. The protein resides in the nucleolus. The protein localises to the cytoplasm. Its subcellular location is the cell cortex. It localises to the cytoskeleton. Involved in regulation of actin cytoskeleton organization and cytokinesis. This Dictyostelium discoideum (Social amoeba) protein is WW domain-containing protein A.